A 541-amino-acid chain; its full sequence is Atlastin-3 (541 aa).

An N-terminal hypervariable region (HVR) region spans residues 1–25 (MLSPQRVAAAASRGADDAMESSKPG). Over 1–445 (MLSPQRVAAA…NVFSTFRTPA (445 aa)) the chain is Cytoplasmic. The GB1/RHD3-type G domain occupies 57 to 305 (DLDVVVVSVA…LIPYVLNPSK (249 aa)). GDP is bound by residues Arg-70, Lys-71, Gly-72, Lys-73, Ser-74, Phe-75, and Arg-109. Position 142 (Asp-142) interacts with Mg(2+). The GDP site is built by Arg-213, Asp-214, Val-272, and Ser-275. The tract at residues 343-434 (MLQATAEANN…YENFCKHNGS (92 aa)) is 3HB (three-helix bundle) domain. An N6-acetyllysine modification is found at Lys-391. The chain crosses the membrane as a helical span at residues 446-466 (VLFTGIVALYIASGLTGFIGL). Residue Glu-467 is a topological domain, lumenal. The chain crosses the membrane as a helical span at residues 468 to 488 (VVAQLFNCMVGLLLIALLTWG). The Cytoplasmic segment spans residues 489 to 541 (YIRYSGQYRELGGAIDFGAAYVLEQASSHIGNSTQATVRDAVVGRPSMDKKAQ). At Ser-535 the chain carries Phosphoserine.

It belongs to the TRAFAC class dynamin-like GTPase superfamily. GB1/RHD3 GTPase family. GB1 subfamily. In terms of assembly, monomeric and homodimeric. The homodimer, transiently formed by two molecules on opposing membranes, is the active form mediating ER membrane fusion. Interacts with ZFYVE27; both proteins are involved in endoplasmic reticulum tubular network organization. Interacts with REEP5; both proteins are involved in endoplasmic reticulum tubular network organization. As to expression, expressed in the central nervous system and in dorsal root ganglia neurons. Expressed in peripheral tissues (at protein level).

The protein resides in the endoplasmic reticulum membrane. The enzyme catalyses GTP + H2O = GDP + phosphate + H(+). Its function is as follows. Atlastin-3 (ATL3) is a membrane-anchored GTPase that mediates the GTP-dependent fusion of endoplasmic reticulum (ER) membranes, maintaining the continuous ER network. It facilitates the formation of three-way junctions where ER tubules intersect. Two atlastin-3 on neighboring ER tubules bind GTP and form loose homodimers through the GB1/RHD3-type G domains and 3HB regions. Upon GTP hydrolysis, the 3HB regions tighten, pulling the membranes together to drive their fusion. After fusion, the homodimer disassembles upon release of inorganic phosphate (Pi). Subsequently, GDP dissociates, resetting the monomers to a conformation ready for a new fusion cycle. The polypeptide is Atlastin-3 (Homo sapiens (Human)).